Consider the following 178-residue polypeptide: MPSNALWLRADQLSSVSPTVLDWLFDEGSLTRRLTALADGAFRVEPLLEGWQTLRDDECQGLDVPPGSSGWVREVYLHGHDRPWVFARSVAARSALEGSGFDLALLGTRSLGELLFSDSAFERGPIEVCRYPAAGLPAEVRAEGLWGRRSRFSRGALGVLVAEVFLPSLWDQAGIADV.

Substrate is bound by residues Arg-73, Leu-111, and Glu-163.

It belongs to the UbiC family.

The protein localises to the cytoplasm. It catalyses the reaction chorismate = 4-hydroxybenzoate + pyruvate. It functions in the pathway cofactor biosynthesis; ubiquinone biosynthesis. Removes the pyruvyl group from chorismate, with concomitant aromatization of the ring, to provide 4-hydroxybenzoate (4HB) for the ubiquinone pathway. In Pseudomonas aeruginosa (strain UCBPP-PA14), this protein is Probable chorismate pyruvate-lyase.